A 315-amino-acid polypeptide reads, in one-letter code: Initiation factor TFIIB homolog (315 aa).

Belongs to the asfivirus C315R family.

In terms of biological role, putative initation factor. The chain is Initiation factor TFIIB homolog from Ornithodoros (relapsing fever ticks).